Reading from the N-terminus, the 447-residue chain is Tubulin beta-2 chain (447 aa).

Residues glutamine 11, glutamate 69, serine 138, glycine 142, threonine 143, glycine 144, asparagine 204, and asparagine 226 each coordinate GTP. Residue glutamate 69 coordinates Mg(2+). Positions 426–447 (QDAGVDEEEEEYEDDAPLEEEV) are disordered. Residues 429–447 (GVDEEEEEYEDDAPLEEEV) show a composition bias toward acidic residues.

It belongs to the tubulin family. Dimer of alpha and beta chains. A typical microtubule is a hollow water-filled tube with an outer diameter of 25 nm and an inner diameter of 15 nM. Alpha-beta heterodimers associate head-to-tail to form protofilaments running lengthwise along the microtubule wall with the beta-tubulin subunit facing the microtubule plus end conferring a structural polarity. Microtubules usually have 13 protofilaments but different protofilament numbers can be found in some organisms and specialized cells. The cofactor is Mg(2+).

It localises to the cytoplasm. The protein resides in the cytoskeleton. Its function is as follows. Tubulin is the major constituent of microtubules, a cylinder consisting of laterally associated linear protofilaments composed of alpha- and beta-tubulin heterodimers. Microtubules grow by the addition of GTP-tubulin dimers to the microtubule end, where a stabilizing cap forms. Below the cap, tubulin dimers are in GDP-bound state, owing to GTPase activity of alpha-tubulin. The polypeptide is Tubulin beta-2 chain (TUB2) (Colletotrichum graminicola (Maize anthracnose fungus)).